We begin with the raw amino-acid sequence, 203 residues long: Thymidylate kinase (203 aa).

9–16 (GPEGAGKT) contacts ATP.

Belongs to the thymidylate kinase family.

The catalysed reaction is dTMP + ATP = dTDP + ADP. Functionally, phosphorylation of dTMP to form dTDP in both de novo and salvage pathways of dTTP synthesis. The polypeptide is Thymidylate kinase (Staphylococcus epidermidis (strain ATCC 35984 / DSM 28319 / BCRC 17069 / CCUG 31568 / BM 3577 / RP62A)).